A 131-amino-acid polypeptide reads, in one-letter code: Large ribosomal subunit protein bL12 (131 aa).

The protein belongs to the bacterial ribosomal protein bL12 family. As to quaternary structure, homodimer. Part of the ribosomal stalk of the 50S ribosomal subunit. Forms a multimeric L10(L12)X complex, where L10 forms an elongated spine to which 2 to 4 L12 dimers bind in a sequential fashion. Binds GTP-bound translation factors.

Its function is as follows. Forms part of the ribosomal stalk which helps the ribosome interact with GTP-bound translation factors. Is thus essential for accurate translation. This chain is Large ribosomal subunit protein bL12, found in Prochlorococcus marinus subsp. pastoris (strain CCMP1986 / NIES-2087 / MED4).